Reading from the N-terminus, the 480-residue chain is Histone-lysine N-methyltransferase ASHR1 (480 aa).

Positions 11 to 248 (RCLGVSNLPQ…KDSEITISYI (238 aa)) constitute an SET domain. Residues Cys-56, Cys-59, Cys-68, Cys-71, Cys-77, Cys-81, His-89, and Cys-93 each contribute to the Zn(2+) site. The segment at 56–93 (CDGCFKTNNLKKCSACQVVWYCGSSCQKSEWKLHRDEC) adopts an MYND-type zinc-finger fold.

Belongs to the class V-like SAM-binding methyltransferase superfamily. Histone-lysine methyltransferase family. SET2 subfamily.

The protein localises to the nucleus. It localises to the chromosome. The catalysed reaction is L-lysyl-[histone] + S-adenosyl-L-methionine = N(6)-methyl-L-lysyl-[histone] + S-adenosyl-L-homocysteine + H(+). Histone methyltransferase. The protein is Histone-lysine N-methyltransferase ASHR1 (ASHR1) of Arabidopsis thaliana (Mouse-ear cress).